The sequence spans 216 residues: Cytidylate kinase (216 aa).

7-15 (GPSGTGKST) provides a ligand contact to ATP.

It belongs to the cytidylate kinase family. Type 1 subfamily.

The protein resides in the cytoplasm. It catalyses the reaction CMP + ATP = CDP + ADP. The enzyme catalyses dCMP + ATP = dCDP + ADP. The chain is Cytidylate kinase from Chlamydia trachomatis serovar L2 (strain ATCC VR-902B / DSM 19102 / 434/Bu).